Reading from the N-terminus, the 922-residue chain is Coronin-7 (922 aa).

WD repeat units follow at residues 75 to 115, 124 to 163, 166 to 205, and 209 to 253; these read CHSD…EALP, PEELPVDVLQFHPTADGVLVSTAGRTVKVWDVAKQQHLTE, AHKDLVQSAVWSRDGATVGTACKDKQLRIFDPRARAQASQ, and AHEN…SALA. Residues 386–462 are disordered; sequence NPAHRPHPRF…TSPSQRSLQS (77 aa). Residues 423–456 show a composition bias toward low complexity; the sequence is SEGFSSPSSLVSPSTPSSLGLSLSSTSGIGTSPS. 2 positions are modified to phosphoserine: serine 459 and serine 462. Lysine 469 participates in a covalent cross-link: Glycyl lysine isopeptide (Lys-Gly) (interchain with G-Cter in ubiquitin). WD repeat units follow at residues 539-579, 589-629, 632-671, and 725-765; these read QNGA…LKNV, GHTE…EQLR, GHQDQIFSLAWSPDGKQLATVCKDGRVRVYDPRSSPLPLQ, and DVAP…PFFL. The interval 854 to 922 is disordered; it reads LQPPGMTPVS…FEGVDEDEWD (69 aa). Position 874 is a phosphothreonine (threonine 874). The span at 881-893 shows a compositional bias: basic and acidic residues; the sequence is LEEKSDQQKKEEL. Serine 912 is modified (phosphoserine).

It belongs to the WD repeat coronin family. Interacts with clathrin adapter AP1 complex. This interaction takes place at Golgi membranes and not AP1-positive endosomal membranes. Interacts (when ubiquitinated at Lys-469) with EPS15. Post-translationally, the membrane-associated form is phosphorylated on tyrosine residues. In terms of processing, ubiquitinated via 'Lys-33'-linked ubiquitin chains by the BCR(KLHL20) E3 ubiquitin ligase complex: 'Lys-33'-linked ubiquitination promotes interaction with EPS15 and facilitates actin polymerization at the trans-Golgi network, thereby facilitating post-Golgi trafficking. Deubiquitinated by ZRANB1/TRABID.

Its subcellular location is the golgi apparatus membrane. The protein resides in the golgi apparatus. It is found in the trans-Golgi network. It localises to the cytoplasmic vesicle. The protein localises to the cytoplasm. Its subcellular location is the cytosol. Functionally, F-actin regulator involved in anterograde Golgi to endosome transport: upon ubiquitination via 'Lys-33'-linked ubiquitin chains by the BCR(KLHL20) E3 ubiquitin ligase complex, interacts with EPS15 and localizes to the trans-Golgi network, where it promotes actin polymerization, thereby facilitating post-Golgi trafficking. May play a role in the maintenance of the Golgi apparatus morphology. The protein is Coronin-7 (Coro7) of Rattus norvegicus (Rat).